The following is a 182-amino-acid chain: ERGELALKDARSKLADVEDALQKAKQDMARLLREYQELMNTKLALDVEIATYRKLLEGEECRLSGEGVGPVNISVVTNTVSSGYGGGSGFGGGLGGGLGGGLGGGLGGGLGGGLGSGLGGGGSSSFYSSSSGGVGLGGGLSVGGSGFSASSGRSLGFGSGGGSSSSVKFVSTTSSSRKSFKS.

In terms of domain architecture, IF rod spans Glu-1 to Leu-63. Residues Glu-1–Leu-63 are coil 2. A tail region spans residues Leu-63–Ser-182. The interval Phe-157 to Ser-182 is disordered. The span at Ser-164–Ser-182 shows a compositional bias: low complexity.

This sequence belongs to the intermediate filament family. As to quaternary structure, heterotetramer of two type I and two type II keratins.

The protein is Keratin, type II cytoskeletal 60 kDa, component III of Bos taurus (Bovine).